The following is a 502-amino-acid chain: 4,4'-diapophytoene desaturase (4,4'-diaponeurosporene-forming) (502 aa).

5 to 17 (VIGAGVTGLAAAA) provides a ligand contact to FAD.

It belongs to the carotenoid/retinoid oxidoreductase family. CrtN subfamily.

The catalysed reaction is 15-cis-4,4'-diapophytoene + 3 FAD + 3 H(+) = all-trans-4,4'-diaponeurosporene + 3 FADH2. It participates in carotenoid biosynthesis; staphyloxanthin biosynthesis; staphyloxanthin from farnesyl diphosphate: step 2/5. Its function is as follows. Involved in the biosynthesis of the yellow-orange carotenoid staphyloxanthin, which plays a role in the virulence via its protective function against oxidative stress. Catalyzes three successive dehydrogenation reactions that lead to the introduction of three double bonds into 4,4'-diapophytoene (dehydrosqualene), with 4,4'-diapophytofluene and 4,4'-diapo-zeta-carotene as intermediates, and 4,4'-diaponeurosporene (the major deep-yellow pigment in staphylococci strains) as the end product. This chain is 4,4'-diapophytoene desaturase (4,4'-diaponeurosporene-forming), found in Staphylococcus aureus (strain MW2).